The primary structure comprises 440 residues: Protein CyaD (440 aa).

At 1-55 (MRRALRELAARHGRVLAASWRQRHRRPAGWFDPVETEFLPSALSLQERPISPTAR) the chain is on the cytoplasmic side. The helical transmembrane segment at 56 to 75 (WLARILMALAAGALVWSVVG) threads the bilayer. Topologically, residues 76–440 (KTEIVVHAAG…RHAGESLGER (365 aa)) are periplasmic.

Belongs to the membrane fusion protein (MFP) (TC 8.A.1) family.

It localises to the cell inner membrane. In terms of biological role, cyaD is necessary for transport of calmodulin-sensitive adenylate cyclase-hemolysin (cyclolysin). The chain is Protein CyaD (cyaD) from Bordetella pertussis (strain ATCC 9797 / DSM 5571 / CCUG 30873 / LMG 14455 / NCTC 10739 / 18323).